The primary structure comprises 138 residues: MTAIFLMSMVFGLACGQTMSFCIPTEYMMHVERKECAYCLTINTTICAGYCMTRDINGKLFLPKYALSQDVCTYRDFMYKTVEIPGCPDHVTPYFSYPVAVSCKCGKCNTDYSDCIHEAIKANYCTKPQKSYVVEFSI.

A signal peptide spans 1 to 20; sequence MTAIFLMSMVFGLACGQTMS. Cystine bridges form between cysteine 22-cysteine 72, cysteine 36-cysteine 87, cysteine 39-cysteine 125, cysteine 47-cysteine 103, cysteine 51-cysteine 105, and cysteine 108-cysteine 115. A glycan (N-linked (GlcNAc...) asparagine) is linked at asparagine 43. A propeptide spanning residues 133–138 is cleaved from the precursor; that stretch reads VVEFSI.

Belongs to the glycoprotein hormones subunit beta family. As to quaternary structure, heterodimer of a common alpha chain and a unique beta chain which confers biological specificity to thyrotropin, lutropin, follitropin and gonadotropin.

The protein resides in the secreted. Its function is as follows. Indispensable for the control of thyroid structure and metabolism. The chain is Thyrotropin subunit beta (TSHB) from Equus caballus (Horse).